Reading from the N-terminus, the 524-residue chain is Importin subunit alpha-1 (524 aa).

The disordered stretch occupies residues 1–42; that stretch reads MGDEFRPSHEERSKMYKSNVRDQNEMRRKRREDEVQIRKNRR. Residues 1–59 enclose the IBB domain; it reads MGDEFRPSHEERSKMYKSNVRDQNEMRRKRREDEVQIRKNRRDEKFERNRQITVQRSLS.

It belongs to the importin alpha family. As to quaternary structure, forms a complex with an importin beta subunit. Adult germline tissues.

It is found in the cytoplasm. Its function is as follows. Binds specifically and directly to substrates containing either a simple or bipartite NLS motif. Promotes docking of import substrates to the nuclear envelope. Seems to act as a cytosolic receptor for both simple and bipartite NLS motifs. The sequence is that of Importin subunit alpha-1 (ima-1) from Caenorhabditis elegans.